A 382-amino-acid chain; its full sequence is uncharacterized protein (382 aa).

11 helical membrane-spanning segments follow: residues 8–28 (VLLL…LNTL), 41–61 (WQVG…TLIA), 73–93 (SYHC…LTVD), 94–114 (FWSW…IWVI), 133–153 (AAYM…LGIV), 157–177 (LLSV…PLLF), 208–228 (GCII…LYLS), 235–255 (ASVG…QWPM), 274–294 (VVIL…ALFI), 325–345 (ALLM…SLLM), and 349–369 (SDNL…MMLL).

This sequence belongs to the major facilitator superfamily. YcaD (TC 2.A.1.26) family.

The protein localises to the cell inner membrane. This is an uncharacterized protein from Yersinia pseudotuberculosis serotype IB (strain PB1/+).